Here is a 24-residue protein sequence, read N- to C-terminus: Attacin (24 aa).

The protein belongs to the attacin/sarcotoxin-2 family.

The protein resides in the secreted. Hemolymph antibacterial protein. The chain is Attacin from Heliothis virescens (Tobacco budworm moth).